Reading from the N-terminus, the 403-residue chain is Metacaspase-7 (403 aa).

Catalysis depends on residues histidine 86 and cysteine 139. S-nitrosocysteine is present on cysteine 139.

Belongs to the peptidase C14B family. Post-translationally, proteolytically processed; by an autocatalytic mechanism. In terms of tissue distribution, expressed in roots, flowers and siliques.

This is Metacaspase-7 (AMC7) from Arabidopsis thaliana (Mouse-ear cress).